The following is a 438-amino-acid chain: Na(+)/H(+) antiporter NhaA (438 aa).

The next 11 membrane-spanning stretches (helical) occupy residues 23-43, 62-82, 104-124, 133-153, 162-182, 185-205, 212-232, 302-322, 337-357, 372-392, and 410-430; these read FGGI…NSFV, FFIG…LFFL, SFPV…YFFL, GFGI…MLLG, VFLI…IALF, TNLK…LALL, SLIP…QSGI, FLAP…NAGV, LGVI…ITFI, WWHI…SMFI, and IAIL…LFLL.

Belongs to the NhaA Na(+)/H(+) (TC 2.A.33) antiporter family.

Its subcellular location is the cell inner membrane. The catalysed reaction is Na(+)(in) + 2 H(+)(out) = Na(+)(out) + 2 H(+)(in). Na(+)/H(+) antiporter that extrudes sodium in exchange for external protons. This is Na(+)/H(+) antiporter NhaA from Helicobacter acinonychis (strain Sheeba).